A 108-amino-acid chain; its full sequence is Trp operon repressor homolog (108 aa).

The DNA-binding element occupies 59-82 (QRQISQLLGVGVATITRGSNELKS).

The protein belongs to the TrpR family. Homodimer.

The protein resides in the cytoplasm. Its function is as follows. This protein is an aporepressor. When complexed with L-tryptophan it binds the operator region of the trp operon and prevents the initiation of transcription. The sequence is that of Trp operon repressor homolog from Aliivibrio fischeri (strain MJ11) (Vibrio fischeri).